An 808-amino-acid polypeptide reads, in one-letter code: Aminotransferase ALT4 (808 aa).

The protein belongs to the class-II pyridoxal-phosphate-dependent aminotransferase family. BioF subfamily. It depends on pyridoxal 5'-phosphate as a cofactor.

It functions in the pathway mycotoxin biosynthesis. Functionally, aminotransferase; part of the gene cluster that mediates the biosynthesis of the host-selective toxins (HSTs) AAL-toxins, sphinganine-analog mycotoxins responsible for Alternaria stem canker on tomato by the tomato pathotype. The biosynthesis starts with the polyketide synthase ALT1-catalyzed C-16 carbon chain assembly from one starter acetyl-CoA unit with malonyl-CoA extender units. ALT1 also selectively transfers methyl groups at the first and the third cycle of chain elongation for AAL toxin. The C-16 polyketide chain is released from the enzyme by a nucleophilic attack of a carbanion, which is derived from R-carbon of glycin by decarboxylation, on the carbonyl carbon of polyketide acyl chain. This step is probably catalyzed by a pyridoxal 5'-phosphate-dependent aminoacyl transferase ALT4. The respective functions of the other enzymes encoded by the cluster have still to be elucidated. The sphingosine N-acyltransferase-like protein ALT7 seems not to act as a resistance/self-tolerance factor against the toxin in the toxin biosynthetic gene cluster, contrary to what is expected. The sequence is that of Aminotransferase ALT4 from Alternaria alternata (Alternaria rot fungus).